We begin with the raw amino-acid sequence, 213 residues long: Holliday junction resolvase RecU (213 aa).

Residues threonine 99, aspartate 101, glutamate 114, and glutamine 133 each coordinate Mg(2+).

Belongs to the RecU family. Requires Mg(2+) as cofactor.

It localises to the cytoplasm. It catalyses the reaction Endonucleolytic cleavage at a junction such as a reciprocal single-stranded crossover between two homologous DNA duplexes (Holliday junction).. In terms of biological role, endonuclease that resolves Holliday junction intermediates in genetic recombination. Cleaves mobile four-strand junctions by introducing symmetrical nicks in paired strands. Promotes annealing of linear ssDNA with homologous dsDNA. Required for DNA repair, homologous recombination and chromosome segregation. In Lactococcus lactis subsp. cremoris (strain MG1363), this protein is Holliday junction resolvase RecU.